A 561-amino-acid polypeptide reads, in one-letter code: Interleukin-1 receptor-like 2 (561 aa).

The signal sequence occupies residues 1-21 (MGMPPLLFCWVSFVLPLFVAA). Ig-like C2-type domains lie at 22-113 (GNCT…INLT), 128-215 (SINS…VRNY), and 225-321 (SGGR…TCHA). At 22–338 (GNCTDVYMHH…ILKRPAPDFR (317 aa)) the chain is on the extracellular side. N-linked (GlcNAc...) asparagine glycans are attached at residues asparagine 23, asparagine 43, asparagine 55, asparagine 111, and asparagine 130. An intrachain disulfide couples cysteine 44 to cysteine 97. An intrachain disulfide couples cysteine 149 to cysteine 199. 6 N-linked (GlcNAc...) asparagine glycosylation sites follow: asparagine 231, asparagine 237, asparagine 253, asparagine 269, asparagine 290, and asparagine 302. Cysteine 252 and cysteine 319 are oxidised to a cystine. A helical transmembrane segment spans residues 339–358 (AYLIGGLMAFLLLAVSILYI). Residues 359-561 (YNTFKVDIVL…LLGHTPRIPG (203 aa)) lie on the Cytoplasmic side of the membrane. The TIR domain occupies 384 to 539 (KLYDAYVLYP…KFWKKVRYHM (156 aa)). Glutamate 470 is a catalytic residue.

It belongs to the interleukin-1 receptor family. As to quaternary structure, interacts with IL1RAP; the association is enhanced by IL36B indicative for an functional signaling complex and inhibited by IL36RN. As to expression, predominant expression in the lung and epididymis, with lower expression in cerebral cortex and testis. Expression in the brain is non-neuronal and associated with the cerebral vasculature. Not detected in any cell line tested.

It localises to the membrane. The enzyme catalyses NAD(+) + H2O = ADP-D-ribose + nicotinamide + H(+). Functionally, receptor for interleukin-36 (IL36A, IL36B and IL36G). After binding to interleukin-36 associates with the coreceptor IL1RAP to form the interleukin-36 receptor complex which mediates interleukin-36-dependent activation of NF-kappa-B, MAPK and other pathways. The IL-36 signaling system is thought to be present in epithelial barriers and to take part in local inflammatory response; it is similar to the IL-1 system. Seems to be involved in skin inflammatory response by induction of the IL-23/IL-17/IL-22 pathway. Receptor for the interleukin IL36G. Binding to the agonist leads to the activation of NF-kappa-B. This chain is Interleukin-1 receptor-like 2 (Il1rl2), found in Rattus norvegicus (Rat).